The chain runs to 544 residues: Pyruvate kinase (544 aa).

Arg-31 provides a ligand contact to substrate. K(+)-binding residues include Asn-33 and Asp-61. 33–36 contributes to the ATP binding site; sequence NSAH. ATP is bound at residue Arg-68. Residue Glu-204 participates in Mg(2+) binding. The substrate site is built by Gly-227, Asp-228, and Thr-260. Asp-228 is a binding site for Mg(2+).

This sequence belongs to the pyruvate kinase family. In terms of assembly, homotetramer. The cofactor is Mg(2+). Requires K(+) as cofactor.

It carries out the reaction pyruvate + ATP = phosphoenolpyruvate + ADP + H(+). Its pathway is carbohydrate degradation; glycolysis; pyruvate from D-glyceraldehyde 3-phosphate: step 5/5. This chain is Pyruvate kinase, found in Thermoplasma acidophilum (strain ATCC 25905 / DSM 1728 / JCM 9062 / NBRC 15155 / AMRC-C165).